We begin with the raw amino-acid sequence, 182 residues long: Large ribosomal subunit protein uL5 (182 aa).

It belongs to the universal ribosomal protein uL5 family. In terms of assembly, part of the 50S ribosomal subunit; part of the 5S rRNA/L5/L18/L25 subcomplex. Contacts the 5S rRNA and the P site tRNA. Forms a bridge to the 30S subunit in the 70S ribosome.

This is one of the proteins that bind and probably mediate the attachment of the 5S RNA into the large ribosomal subunit, where it forms part of the central protuberance. In the 70S ribosome it contacts protein S13 of the 30S subunit (bridge B1b), connecting the 2 subunits; this bridge is implicated in subunit movement. Contacts the P site tRNA; the 5S rRNA and some of its associated proteins might help stabilize positioning of ribosome-bound tRNAs. The polypeptide is Large ribosomal subunit protein uL5 (Borreliella burgdorferi (strain ATCC 35210 / DSM 4680 / CIP 102532 / B31) (Borrelia burgdorferi)).